Here is a 339-residue protein sequence, read N- to C-terminus: MKKILVTGGTGFIGSHTVVSLLKSGHQVVILDNLCNSSINILPRLKTITGQEIPFYQGDIRDREILRRIFAENRIDSVIHFAGLKAVGESVAEPMKYYDNNVSGSLVLAEEMARAGVFSIVFSSSATVYGDPGKVPYTEDMPPGDTTSPYGASKSMVERILTDIQKADPRWSMILLRYFNPIGAHESGLIGEQPNGIPNNLLPYICQVAAGKLPQLAVFGDDYPTPDGTGMRDYIHVMDLAEGHVAAMQAKSNVAGTHLLNLGSGRASSVLEIIRAFEAASGLTIPYEVKPRRAGDLACFYADPSYTKAQIGWQTQRDLTQMMEDSWRWVSNNPNGYDD.

Residues 12–13 (FI), 32–37 (DNLCNS), 59–60 (DI), 81–85 (FAGLK), Asn100, Ser125, Tyr150, Lys154, and Phe179 contribute to the NAD(+) site. Substrate contacts are provided by Ser125 and Tyr150. The active-site Proton acceptor is Tyr150. Substrate-binding positions include Asn180, 200–201 (NL), 217–219 (AVF), Arg232, and 293–296 (RAGD).

This sequence belongs to the NAD(P)-dependent epimerase/dehydratase family. Homodimer. NAD(+) is required as a cofactor.

The enzyme catalyses UDP-alpha-D-glucose = UDP-alpha-D-galactose. Its pathway is carbohydrate metabolism; galactose metabolism. Functionally, involved in the metabolism of galactose. Plays an essential role in the incorporation of galactose into meningococcal lipopolysaccharide surface molecules, which are important for pathogenesis. Catalyzes the conversion of UDP-galactose (UDP-Gal) to UDP-glucose (UDP-Glc) through a mechanism involving the transient reduction of NAD. The polypeptide is UDP-glucose 4-epimerase (galE) (Neisseria meningitidis serogroup B (strain ATCC BAA-335 / MC58)).